Here is a 226-residue protein sequence, read N- to C-terminus: Ribosomal RNA small subunit methyltransferase G (226 aa).

S-adenosyl-L-methionine contacts are provided by residues Gly83, Phe88, 136–137, and Arg152; that span reads IE. A disordered region spans residues 199 to 226; that stretch reads FSPSQSDPEGSVLKVRGLHGPDGQPHRR.

Belongs to the methyltransferase superfamily. RNA methyltransferase RsmG family.

The protein resides in the cytoplasm. It catalyses the reaction guanosine(527) in 16S rRNA + S-adenosyl-L-methionine = N(7)-methylguanosine(527) in 16S rRNA + S-adenosyl-L-homocysteine. In terms of biological role, specifically methylates the N7 position of guanine in position 527 of 16S rRNA. This chain is Ribosomal RNA small subunit methyltransferase G, found in Parvibaculum lavamentivorans (strain DS-1 / DSM 13023 / NCIMB 13966).